Consider the following 241-residue polypeptide: MAASGEARRVLVYGGRGALGSRCVQAFRARNWWVASIDVVENEEASASVIVKMTDSFTEQADQVTAEVGKLLGDQKVDAILCVAGGWAGGNAKSKSLFKNCDLMWKQSIWTSTISSHLATKHLKEGGLLTLAGAKAALDGTPGMIGYGMAKGAVHQLCQSLAGKNSGMPSGAAAIAVLPVTLDTPMNRKSMPEADFSSWTPLEFLVETFHDWITGNKRPNSGSLIQVVTTDGKTELTPAYF.

11–35 (LVYGGRGALGSRCVQAFRARNWWVA) lines the NADP(+) pocket. N6-succinyllysine is present on residues lysine 70, lysine 76, lysine 93, and lysine 99. Catalysis depends on tyrosine 147, which acts as the Proton acceptor. Serine 170 carries the post-translational modification Phosphoserine.

It belongs to the short-chain dehydrogenases/reductases (SDR) family. Homodimer.

The catalysed reaction is 5,6,7,8-tetrahydropteridine + NAD(+) = 6,7-dihydropteridine + NADH + H(+). It catalyses the reaction 5,6,7,8-tetrahydropteridine + NADP(+) = 6,7-dihydropteridine + NADPH + H(+). Functionally, catalyzes the conversion of quinonoid dihydrobiopterin into tetrahydrobiopterin. This is Dihydropteridine reductase (Qdpr) from Rattus norvegicus (Rat).